The chain runs to 121 residues: Small ribosomal subunit protein bS6 (121 aa).

A disordered region spans residues D96–A121. Over residues T105–Q115 the composition is skewed to basic and acidic residues.

This sequence belongs to the bacterial ribosomal protein bS6 family.

Functionally, binds together with bS18 to 16S ribosomal RNA. The protein is Small ribosomal subunit protein bS6 of Albidiferax ferrireducens (strain ATCC BAA-621 / DSM 15236 / T118) (Rhodoferax ferrireducens).